A 474-amino-acid chain; its full sequence is Bifunctional protein GlmU (474 aa).

Positions 1–232 are pyrophosphorylase; the sequence is MSALDVIIMA…ALQVAGVNSP (232 aa). UDP-N-acetyl-alpha-D-glucosamine is bound by residues Lys23, Gln78, 83-84, 105-107, Gly142, Glu157, and Asn230; these read GT and SGD. Asp107 serves as a coordination point for Mg(2+). Asn230 lines the Mg(2+) pocket. A linker region spans residues 233 to 253; it reads LQLAELERAHQLAQARALMEQ. The segment at 254–474 is N-acetyltransferase; it reads GVRLADPARF…WQRPAKLPKA (221 aa). UDP-N-acetyl-alpha-D-glucosamine-binding residues include Arg349 and Lys367. His379 serves as the catalytic Proton acceptor. UDP-N-acetyl-alpha-D-glucosamine-binding residues include Tyr382 and Asn393. Residues Ala396, 402–403, Ser421, Gly439, and Arg456 each bind acetyl-CoA; that span reads NY. The segment at 454–474 is disordered; the sequence is VARGKQVTKENWQRPAKLPKA.

It in the N-terminal section; belongs to the N-acetylglucosamine-1-phosphate uridyltransferase family. This sequence in the C-terminal section; belongs to the transferase hexapeptide repeat family. Homotrimer. Mg(2+) serves as cofactor.

Its subcellular location is the cytoplasm. The catalysed reaction is alpha-D-glucosamine 1-phosphate + acetyl-CoA = N-acetyl-alpha-D-glucosamine 1-phosphate + CoA + H(+). The enzyme catalyses N-acetyl-alpha-D-glucosamine 1-phosphate + UTP + H(+) = UDP-N-acetyl-alpha-D-glucosamine + diphosphate. The protein operates within nucleotide-sugar biosynthesis; UDP-N-acetyl-alpha-D-glucosamine biosynthesis; N-acetyl-alpha-D-glucosamine 1-phosphate from alpha-D-glucosamine 6-phosphate (route II): step 2/2. Its pathway is nucleotide-sugar biosynthesis; UDP-N-acetyl-alpha-D-glucosamine biosynthesis; UDP-N-acetyl-alpha-D-glucosamine from N-acetyl-alpha-D-glucosamine 1-phosphate: step 1/1. It functions in the pathway bacterial outer membrane biogenesis; LPS lipid A biosynthesis. In terms of biological role, catalyzes the last two sequential reactions in the de novo biosynthetic pathway for UDP-N-acetylglucosamine (UDP-GlcNAc). The C-terminal domain catalyzes the transfer of acetyl group from acetyl coenzyme A to glucosamine-1-phosphate (GlcN-1-P) to produce N-acetylglucosamine-1-phosphate (GlcNAc-1-P), which is converted into UDP-GlcNAc by the transfer of uridine 5-monophosphate (from uridine 5-triphosphate), a reaction catalyzed by the N-terminal domain. In Paracidovorax citrulli (strain AAC00-1) (Acidovorax citrulli), this protein is Bifunctional protein GlmU.